Here is a 417-residue protein sequence, read N- to C-terminus: Solute carrier family 25 member 46-A (417 aa).

Residues 1–13 show a composition bias toward basic and acidic residues; the sequence is MQPRRPDRFDGLE. A disordered region spans residues 1 to 90; it reads MQPRRPDRFD…AFGEENSNSA (90 aa). The segment covering 31-41 has biased composition (low complexity); the sequence is SSFPARSFSSS. The Solcar 1 repeat unit spans residues 95 to 186; that stretch reads QLNRFAGFGI…GILSEFTHLP (92 aa). 6 consecutive transmembrane segments (helical) span residues 102–122, 162–182, 198–218, 257–277, 313–333, and 382–402; these read FGIG…CIVL, MGST…LSEF, IGGH…FYSA, LLPL…HYIV, FPEL…LYPL, and LGFY…AIVL. One copy of the Solcar 2 repeat lies at 310-415; that stretch reads EDYFPELIAN…KIIYSSVVQT (106 aa).

Belongs to the mitochondrial carrier (TC 2.A.29) family.

The protein resides in the mitochondrion outer membrane. Functionally, may play a role in mitochondrial dynamics by controlling mitochondrial membrane fission. In Xenopus laevis (African clawed frog), this protein is Solute carrier family 25 member 46-A (slc25a46-a).